The sequence spans 415 residues: Pectin acetylesterase 12 (415 aa).

A signal peptide spans 1 to 20 (MVKLLLVGFVVAGIILGTQA). N27 is a glycosylation site (N-linked (GlcNAc...) asparagine). Active-site charge relay system residues include S197, D293, and H360.

It belongs to the pectinacetylesterase family.

The protein resides in the secreted. It is found in the cell wall. In terms of biological role, hydrolyzes acetyl esters in homogalacturonan regions of pectin. In type I primary cell wall, galacturonic acid residues of pectin can be acetylated at the O-2 and O-3 positions. Decreasing the degree of acetylation of pectin gels in vitro alters their physical properties. This is Pectin acetylesterase 12 from Arabidopsis thaliana (Mouse-ear cress).